The primary structure comprises 94 residues: Co-chaperonin GroES (94 aa).

The protein belongs to the GroES chaperonin family. In terms of assembly, heptamer of 7 subunits arranged in a ring. Interacts with the chaperonin GroEL.

It localises to the cytoplasm. Its function is as follows. Together with the chaperonin GroEL, plays an essential role in assisting protein folding. The GroEL-GroES system forms a nano-cage that allows encapsulation of the non-native substrate proteins and provides a physical environment optimized to promote and accelerate protein folding. GroES binds to the apical surface of the GroEL ring, thereby capping the opening of the GroEL channel. The chain is Co-chaperonin GroES from Brevibacillus brevis (strain 47 / JCM 6285 / NBRC 100599).